A 356-amino-acid polypeptide reads, in one-letter code: Xylose/arabinose import permease protein XylH (356 aa).

Helical transmembrane passes span 14-34, 41-61, 70-90, 96-116, 126-146, 161-181, 211-231, 242-262, 266-286, and 287-307; these read LFLVNVIIALFFYFENSAYFS, IFQYLAEIGIIAIGEAMLMLC, ALANFVPLITLTIYNSIYQAI, IVVSILLSLGLASLIGLMNGL, LITTVGTLFLFNGIALIYSGG, VSILPVPFIWSLGALVFLILL, VKIINFIIMANIGALVGIIQG, FTADVVLEGIAAAVIGGTSLV, GSLVGAFLGSVFISELLNGFN, and ILGINAYEFDAILGGAIVVVM.

The protein belongs to the binding-protein-dependent transport system permease family. In terms of assembly, the complex is composed of two ATP-binding proteins (XylG), two transmembrane proteins (XylH) and a solute-binding protein (XylF).

It is found in the cell membrane. Part of the ABC transporter complex XylFGH involved in the uptake of xylose and arabinose. Responsible for the translocation of the substrate across the membrane. The protein is Xylose/arabinose import permease protein XylH of Sulfolobus acidocaldarius (strain ATCC 33909 / DSM 639 / JCM 8929 / NBRC 15157 / NCIMB 11770).